Reading from the N-terminus, the 306-residue chain is Ornithine carbamoyltransferase (306 aa).

Carbamoyl phosphate contacts are provided by residues 54–57, Gln81, Arg105, and 132–135; these read STRT and HPLQ. L-ornithine-binding positions include Asn162, Asp226, and 230-231; that span reads SM. Carbamoyl phosphate-binding positions include 266–267 and Arg294; that span reads CL.

This sequence belongs to the aspartate/ornithine carbamoyltransferase superfamily. OTCase family.

It localises to the cytoplasm. The catalysed reaction is carbamoyl phosphate + L-ornithine = L-citrulline + phosphate + H(+). Its pathway is amino-acid biosynthesis; L-arginine biosynthesis; L-arginine from L-ornithine and carbamoyl phosphate: step 1/3. Its function is as follows. Reversibly catalyzes the transfer of the carbamoyl group from carbamoyl phosphate (CP) to the N(epsilon) atom of ornithine (ORN) to produce L-citrulline. The polypeptide is Ornithine carbamoyltransferase (Sulfurisphaera tokodaii (strain DSM 16993 / JCM 10545 / NBRC 100140 / 7) (Sulfolobus tokodaii)).